The chain runs to 491 residues: Putative F-box/LRR-repeat protein At3g59230 (491 aa).

Positions Lys-11 to Asp-57 constitute an F-box domain. LRR repeat units lie at residues Leu-127–Ala-154, Asn-156–Ser-182, Glu-184–Asp-209, Ala-325–Ser-351, Asn-352–Gly-377, Asn-419–Tyr-444, and Val-472–Ile-491.

The chain is Putative F-box/LRR-repeat protein At3g59230 from Arabidopsis thaliana (Mouse-ear cress).